The primary structure comprises 864 residues: DNA mismatch repair protein MutS (864 aa).

607-614 is an ATP binding site; it reads GPNMGGKS.

Belongs to the DNA mismatch repair MutS family.

Functionally, this protein is involved in the repair of mismatches in DNA. It is possible that it carries out the mismatch recognition step. This protein has a weak ATPase activity. The chain is DNA mismatch repair protein MutS from Neisseria meningitidis serogroup C (strain 053442).